We begin with the raw amino-acid sequence, 473 residues long: 3-isopropylmalate dehydratase large subunit 2 (473 aa).

Cys-350, Cys-410, and Cys-413 together coordinate [4Fe-4S] cluster.

This sequence belongs to the aconitase/IPM isomerase family. LeuC type 1 subfamily. Heterodimer of LeuC and LeuD. Requires [4Fe-4S] cluster as cofactor.

The enzyme catalyses (2R,3S)-3-isopropylmalate = (2S)-2-isopropylmalate. The protein operates within amino-acid biosynthesis; L-leucine biosynthesis; L-leucine from 3-methyl-2-oxobutanoate: step 2/4. In terms of biological role, catalyzes the isomerization between 2-isopropylmalate and 3-isopropylmalate, via the formation of 2-isopropylmaleate. The protein is 3-isopropylmalate dehydratase large subunit 2 of Salmonella typhimurium (strain LT2 / SGSC1412 / ATCC 700720).